The sequence spans 801 residues: N,N'-diacetylchitobiose phosphorylase (801 aa).

6 residues coordinate N-acetyl-alpha-D-glucosamine 1-phosphate: Arg333, Arg343, Arg349, Asp350, Trp490, and Asp492. Residue Asp492 is the Proton donor of the active site. Residues Asp492, Lys636, and Glu637 each contribute to the N-acetyl-D-glucosamine site. The N-acetyl-alpha-D-glucosamine 1-phosphate site is built by Glu637, His644, Gln690, Thr709, and Gly710.

Belongs to the glycosyl hydrolase 94 family. As to quaternary structure, homodimer.

It catalyses the reaction N,N'-diacetylchitobiose + phosphate = N-acetyl-alpha-D-glucosamine 1-phosphate + N-acetyl-D-glucosamine. In terms of biological role, catalyzes the reversible phosphorolysis of chitobiose (N,N'-diacetylchitobiose or (GlcNAc)(2)) into N-acetyl-alpha-D-glucosamine 1-phosphate (GlcNAc-1-P) and N-acetyl-D-glucosamine (GlcNAc) with inversion of the anomeric configuration. In the synthetic reaction, is also active on glucose-1-phosphate with 10% activity as compared with that on GlcNAc-1-P. GlcNAc is the best acceptor substrate, but the enzyme can use aryl-beta-glycosides of GlcNAc as the acceptor substrate with 10-20% activities of GlcNAc. Shows no phosphorolytic activity on cellobiose. The chain is N,N'-diacetylchitobiose phosphorylase from Vibrio proteolyticus (Aeromonas proteolytica).